The primary structure comprises 164 residues: UPF0304 protein YfbU (164 aa).

It belongs to the UPF0304 family.

The chain is UPF0304 protein YfbU from Shigella flexneri.